Here is a 433-residue protein sequence, read N- to C-terminus: Probable oxaloacetate decarboxylase beta chain (433 aa).

The next 9 membrane-spanning stretches (helical) occupy residues 13–35 (LFHL…YLAI), 125–147 (YLFY…GVGA), 162–184 (LLGA…LSSL), 189–211 (FSVA…AIYV), 215–237 (LAPE…VPMI), 267–289 (IGFP…PLLG), 309–328 (TAQN…SVGS), 340–362 (TIGI…VLMA), and 404–426 (FLLM…AAGV).

Belongs to the GcdB/MmdB/OadB family. Heterotrimer of an alpha, a beta and a gamma subunit. Na(+) serves as cofactor.

It is found in the cell membrane. It carries out the reaction oxaloacetate + 2 Na(+)(in) + H(+) = pyruvate + 2 Na(+)(out) + CO2. In terms of biological role, catalyzes the decarboxylation of oxaloacetate coupled to Na(+) translocation. The sequence is that of Probable oxaloacetate decarboxylase beta chain (oadB) from Vibrio cholerae serotype O1 (strain ATCC 39315 / El Tor Inaba N16961).